We begin with the raw amino-acid sequence, 434 residues long: Serine hydroxymethyltransferase (434 aa).

(6S)-5,6,7,8-tetrahydrofolate contacts are provided by residues Leu-128 and 132-134 (GHL). At Lys-237 the chain carries N6-(pyridoxal phosphate)lysine.

It belongs to the SHMT family. In terms of assembly, homodimer. Requires pyridoxal 5'-phosphate as cofactor.

It is found in the cytoplasm. The enzyme catalyses (6R)-5,10-methylene-5,6,7,8-tetrahydrofolate + glycine + H2O = (6S)-5,6,7,8-tetrahydrofolate + L-serine. It functions in the pathway one-carbon metabolism; tetrahydrofolate interconversion. Its pathway is amino-acid biosynthesis; glycine biosynthesis; glycine from L-serine: step 1/1. Its function is as follows. Catalyzes the reversible interconversion of serine and glycine with tetrahydrofolate (THF) serving as the one-carbon carrier. This reaction serves as the major source of one-carbon groups required for the biosynthesis of purines, thymidylate, methionine, and other important biomolecules. Also exhibits THF-independent aldolase activity toward beta-hydroxyamino acids, producing glycine and aldehydes, via a retro-aldol mechanism. The polypeptide is Serine hydroxymethyltransferase (Corynebacterium efficiens (strain DSM 44549 / YS-314 / AJ 12310 / JCM 11189 / NBRC 100395)).